We begin with the raw amino-acid sequence, 283 residues long: CDP-abequose synthase (283 aa).

Residues 7 to 13, 48 to 49, Y129, and K133 each bind NAD(+); these read GGSGYIG and EF. Y129 acts as the Proton acceptor in catalysis.

This sequence belongs to the NAD(P)-dependent epimerase/dehydratase family.

The catalysed reaction is CDP-alpha-D-abequose + NADP(+) = CDP-4-dehydro-3,6-dideoxy-alpha-D-glucose + NADPH + H(+). It functions in the pathway bacterial outer membrane biogenesis; LPS O-antigen biosynthesis. Functionally, the CDP-abequose synthase is involved in lipopolysaccharides (LPS) synthesis containing abequose which are important antigens of the cell surface responsible for the serological O specificity. Derivatives of the 3,6-dideoxyhexose group have a particular highly immunogenic character. This Yersinia pseudotuberculosis protein is CDP-abequose synthase (rfbJ).